The sequence spans 183 residues: Dual-action ribosomal maturation protein DarP (183 aa).

This sequence belongs to the DarP family.

It is found in the cytoplasm. In terms of biological role, member of a network of 50S ribosomal subunit biogenesis factors which assembles along the 30S-50S interface, preventing incorrect 23S rRNA structures from forming. Promotes peptidyl transferase center (PTC) maturation. The protein is Dual-action ribosomal maturation protein DarP of Salmonella arizonae (strain ATCC BAA-731 / CDC346-86 / RSK2980).